The sequence spans 192 residues: Orotate phosphoribosyltransferase (192 aa).

116 to 124 (EDIVTTGLS) is a 5-phospho-alpha-D-ribose 1-diphosphate binding site. Residues threonine 120 and arginine 148 each coordinate orotate.

The protein belongs to the purine/pyrimidine phosphoribosyltransferase family. PyrE subfamily. Homodimer. It depends on Mg(2+) as a cofactor.

It carries out the reaction orotidine 5'-phosphate + diphosphate = orotate + 5-phospho-alpha-D-ribose 1-diphosphate. Its pathway is pyrimidine metabolism; UMP biosynthesis via de novo pathway; UMP from orotate: step 1/2. In terms of biological role, catalyzes the transfer of a ribosyl phosphate group from 5-phosphoribose 1-diphosphate to orotate, leading to the formation of orotidine monophosphate (OMP). This chain is Orotate phosphoribosyltransferase, found in Bartonella tribocorum (strain CIP 105476 / IBS 506).